A 299-amino-acid polypeptide reads, in one-letter code: Tetrahydromethanopterin S-methyltransferase subunit E (299 aa).

Transmembrane regions (helical) follow at residues A57–W77, I80–V100, I133–L153, L158–I178, G237–I257, and L261–I281.

This sequence belongs to the MtrE family. The complex is composed of 8 subunits; MtrA, MtrB, MtrC, MtrD, MtrE, MtrF, MtrG and MtrH.

The protein resides in the cell membrane. It catalyses the reaction 5-methyl-5,6,7,8-tetrahydromethanopterin + coenzyme M + 2 Na(+)(in) = 5,6,7,8-tetrahydromethanopterin + methyl-coenzyme M + 2 Na(+)(out). It participates in one-carbon metabolism; methanogenesis from CO(2); methyl-coenzyme M from 5,10-methylene-5,6,7,8-tetrahydromethanopterin: step 2/2. Its function is as follows. Part of a complex that catalyzes the formation of methyl-coenzyme M and tetrahydromethanopterin from coenzyme M and methyl-tetrahydromethanopterin. This is an energy-conserving, sodium-ion translocating step. The chain is Tetrahydromethanopterin S-methyltransferase subunit E from Methanococcus vannielii (strain ATCC 35089 / DSM 1224 / JCM 13029 / OCM 148 / SB).